We begin with the raw amino-acid sequence, 311 residues long: Ribonuclease HIII (311 aa).

The region spanning 95 to 311 (MSIVGSDEVG…NTEKALRLLR (217 aa)) is the RNase H type-2 domain. Residues Asp101, Glu102, and Asp206 each contribute to the a divalent metal cation site.

The protein belongs to the RNase HII family. RnhC subfamily. Mn(2+) serves as cofactor. Requires Mg(2+) as cofactor.

Its subcellular location is the cytoplasm. It carries out the reaction Endonucleolytic cleavage to 5'-phosphomonoester.. In terms of biological role, endonuclease that specifically degrades the RNA of RNA-DNA hybrids. In Bacillus cereus (strain ATCC 14579 / DSM 31 / CCUG 7414 / JCM 2152 / NBRC 15305 / NCIMB 9373 / NCTC 2599 / NRRL B-3711), this protein is Ribonuclease HIII.